A 291-amino-acid chain; its full sequence is ATP synthase gamma chain (291 aa).

It belongs to the ATPase gamma chain family. In terms of assembly, F-type ATPases have 2 components, CF(1) - the catalytic core - and CF(0) - the membrane proton channel. CF(1) has five subunits: alpha(3), beta(3), gamma(1), delta(1), epsilon(1). CF(0) has three main subunits: a, b and c.

It is found in the cell inner membrane. Functionally, produces ATP from ADP in the presence of a proton gradient across the membrane. The gamma chain is believed to be important in regulating ATPase activity and the flow of protons through the CF(0) complex. In Neisseria meningitidis serogroup C (strain 053442), this protein is ATP synthase gamma chain.